The primary structure comprises 967 residues: uncharacterized protein (967 aa).

Residues 1-29 (MKKKLKSVLIWFLIFTFNLSLGSFREVFA) form the signal peptide. 2 BIG2 domains span residues 38 to 107 (TAIT…QDGS) and 133 to 190 (LPVG…VNDG).

This is an uncharacterized protein from Clostridium acetobutylicum (strain ATCC 824 / DSM 792 / JCM 1419 / IAM 19013 / LMG 5710 / NBRC 13948 / NRRL B-527 / VKM B-1787 / 2291 / W).